We begin with the raw amino-acid sequence, 882 residues long: Alanine--tRNA ligase (882 aa).

His-567, His-571, Cys-669, and His-673 together coordinate Zn(2+).

This sequence belongs to the class-II aminoacyl-tRNA synthetase family. It depends on Zn(2+) as a cofactor.

It is found in the cytoplasm. It catalyses the reaction tRNA(Ala) + L-alanine + ATP = L-alanyl-tRNA(Ala) + AMP + diphosphate. Functionally, catalyzes the attachment of alanine to tRNA(Ala) in a two-step reaction: alanine is first activated by ATP to form Ala-AMP and then transferred to the acceptor end of tRNA(Ala). Also edits incorrectly charged Ser-tRNA(Ala) and Gly-tRNA(Ala) via its editing domain. The sequence is that of Alanine--tRNA ligase from Thermosynechococcus vestitus (strain NIES-2133 / IAM M-273 / BP-1).